A 137-amino-acid chain; its full sequence is Large ribosomal subunit protein uL16 (137 aa).

Belongs to the universal ribosomal protein uL16 family. In terms of assembly, part of the 50S ribosomal subunit.

In terms of biological role, binds 23S rRNA and is also seen to make contacts with the A and possibly P site tRNAs. In Tolumonas auensis (strain DSM 9187 / NBRC 110442 / TA 4), this protein is Large ribosomal subunit protein uL16.